The sequence spans 296 residues: Glycine--tRNA ligase alpha subunit (296 aa).

This sequence belongs to the class-II aminoacyl-tRNA synthetase family. In terms of assembly, tetramer of two alpha and two beta subunits.

Its subcellular location is the cytoplasm. It carries out the reaction tRNA(Gly) + glycine + ATP = glycyl-tRNA(Gly) + AMP + diphosphate. This is Glycine--tRNA ligase alpha subunit from Francisella tularensis subsp. holarctica (strain FTNF002-00 / FTA).